A 430-amino-acid chain; its full sequence is D-galactonate transporter (430 aa).

Over 1–17 (MDIPVNAAKPGRRRYLT) the chain is Cytoplasmic. Residues 18-39 (LVMIFITVVICYVDRANLAVAS) traverse the membrane as a helical segment. Y29 and R32 together coordinate D-galactonate. Residues 40–50 (AHIQEEFGITK) are Periplasmic-facing. Residues 51-74 (AEMGYVFSAFAWLYTLCQIPGGWF) traverse the membrane as a helical segment. D-galactonate is bound at residue Y64. Topologically, residues 75–81 (LDRVGSR) are cytoplasmic. A helical transmembrane segment spans residues 82–100 (VTYFIAIFGWSVATLFQGF). Topologically, residues 101 to 103 (ATG) are periplasmic. A helical transmembrane segment spans residues 104–125 (LMSLIGLRAITGIFEAPAFPTN). Residues 126-141 (NRMVTSWFPEHERASA) lie on the Cytoplasmic side of the membrane. A helical transmembrane segment spans residues 142–164 (VGFYTSGQFVGLAFLTPLLIWIQ). The Periplasmic portion of the chain corresponds to 165–168 (EMLS). Residues 169–190 (WHWVFIVTGGIGIIWSLIWFKV) traverse the membrane as a helical segment. At 191–241 (YQPPRLTKGISKAELDYIRDGGGLVDGDAPVKKEARQPLTAKDWKLVFHRK) the chain is on the cytoplasmic side. A helical membrane pass occupies residues 242–267 (LIGVYLGQFAVASTLWFFLTWFPNYL). Over 268–276 (TQEKGITAL) the chain is Periplasmic. The chain crosses the membrane as a helical span at residues 277-297 (KAGFMTTVPFLAAFVGVLLSG). At 298–314 (WVADLLVRKGFSLGFAR) the chain is on the cytoplasmic side. The helical transmembrane segment at 315–333 (KTPIICGLLISTCIMGANY) threads the bilayer. The Periplasmic segment spans residues 334-336 (TND). A helical transmembrane segment spans residues 337–354 (PMMIMCLMALAFFGNGFA). The Cytoplasmic segment spans residues 355 to 373 (SITWSLVSSLAPMRLIGLT). W358 is a D-galactonate binding site. A helical transmembrane segment spans residues 374–395 (GGVFNFAGGLGGITVPLVVGYL). At 396–400 (AQGYG) the chain is on the periplasmic side. Residues 401-423 (FAPALVYISAVALIGALSYILLV) traverse the membrane as a helical segment. The Cytoplasmic segment spans residues 424–430 (GDVKRVG).

The protein belongs to the major facilitator superfamily. Phthalate permease family.

The protein localises to the cell inner membrane. It carries out the reaction D-galactonate(in) + H(+)(in) = D-galactonate(out) + H(+)(out). Its function is as follows. Involved in D-galactonate metabolism. Catalyzes the proton-dependent uptake of galactonate into the cell. This chain is D-galactonate transporter (dgoT), found in Escherichia coli O6:H1 (strain CFT073 / ATCC 700928 / UPEC).